The chain runs to 530 residues: Bifunctional purine biosynthesis protein PurH (530 aa).

Residues 1–148 (MNNARPIHRA…KNHKDVAIVV (148 aa)) form the MGS-like domain.

This sequence belongs to the PurH family.

The catalysed reaction is (6R)-10-formyltetrahydrofolate + 5-amino-1-(5-phospho-beta-D-ribosyl)imidazole-4-carboxamide = 5-formamido-1-(5-phospho-D-ribosyl)imidazole-4-carboxamide + (6S)-5,6,7,8-tetrahydrofolate. It catalyses the reaction IMP + H2O = 5-formamido-1-(5-phospho-D-ribosyl)imidazole-4-carboxamide. It functions in the pathway purine metabolism; IMP biosynthesis via de novo pathway; 5-formamido-1-(5-phospho-D-ribosyl)imidazole-4-carboxamide from 5-amino-1-(5-phospho-D-ribosyl)imidazole-4-carboxamide (10-formyl THF route): step 1/1. It participates in purine metabolism; IMP biosynthesis via de novo pathway; IMP from 5-formamido-1-(5-phospho-D-ribosyl)imidazole-4-carboxamide: step 1/1. This Vibrio cholerae serotype O1 (strain ATCC 39541 / Classical Ogawa 395 / O395) protein is Bifunctional purine biosynthesis protein PurH.